Here is a 117-residue protein sequence, read N- to C-terminus: Cell cycle protein GpsB (117 aa).

A coiled-coil region spans residues 32-70; sequence LDNVIKDYDAFVKENQRLQDENERLLAKVDELTRQVQVG.

The protein belongs to the GpsB family. As to quaternary structure, forms polymers through the coiled coil domains. Interacts with PBP1, MreC and EzrA.

The protein resides in the cytoplasm. Divisome component that associates with the complex late in its assembly, after the Z-ring is formed, and is dependent on DivIC and PBP2B for its recruitment to the divisome. Together with EzrA, is a key component of the system that regulates PBP1 localization during cell cycle progression. Its main role could be the removal of PBP1 from the cell pole after pole maturation is completed. Also contributes to the recruitment of PBP1 to the division complex. Not essential for septum formation. In Levilactobacillus brevis (strain ATCC 367 / BCRC 12310 / CIP 105137 / JCM 1170 / LMG 11437 / NCIMB 947 / NCTC 947) (Lactobacillus brevis), this protein is Cell cycle protein GpsB.